We begin with the raw amino-acid sequence, 211 residues long: Protein-methionine-sulfoxide reductase heme-binding subunit MsrQ (211 aa).

The next 5 helical transmembrane spans lie at Trp10–Ile30, Leu82–Val102, Pro116–Thr136, Phe153–Ser173, and Ile178–Phe198.

This sequence belongs to the MsrQ family. In terms of assembly, heterodimer of a catalytic subunit (MsrP) and a heme-binding subunit (MsrQ). FMN is required as a cofactor. Heme b serves as cofactor.

It localises to the cell inner membrane. Part of the MsrPQ system that repairs oxidized periplasmic proteins containing methionine sulfoxide residues (Met-O), using respiratory chain electrons. Thus protects these proteins from oxidative-stress damage caused by reactive species of oxygen and chlorine generated by the host defense mechanisms. MsrPQ is essential for the maintenance of envelope integrity under bleach stress, rescuing a wide series of structurally unrelated periplasmic proteins from methionine oxidation, including the primary periplasmic chaperone SurA and the lipoprotein Pal. MsrQ provides electrons for reduction to the reductase catalytic subunit MsrP, using the quinone pool of the respiratory chain. This Escherichia coli (strain UTI89 / UPEC) protein is Protein-methionine-sulfoxide reductase heme-binding subunit MsrQ.